Consider the following 123-residue polypeptide: Large ribosomal subunit protein uL14 (123 aa).

Belongs to the universal ribosomal protein uL14 family. In terms of assembly, part of the 50S ribosomal subunit. Forms a cluster with proteins L3 and L19. In the 70S ribosome, L14 and L19 interact and together make contacts with the 16S rRNA in bridges B5 and B8.

Functionally, binds to 23S rRNA. Forms part of two intersubunit bridges in the 70S ribosome. The chain is Large ribosomal subunit protein uL14 from Corynebacterium urealyticum (strain ATCC 43042 / DSM 7109).